The primary structure comprises 342 residues: Arginase 1, mitochondrial (342 aa).

The transit peptide at M1 to T22 directs the protein to the mitochondrion. Residues S77 and G96–N99 contribute to the L-ornithine site. Mn(2+) contacts are provided by H161, D185, H187, and D189. D189–Y191 is a binding site for L-ornithine. Substrate is bound at residue E195–N197. An L-ornithine-binding site is contributed by S224. Residues D270 and D272 each coordinate Mn(2+). E313 serves as a coordination point for substrate.

The protein belongs to the arginase family. Forms homohexamers. It depends on Mn(2+) as a cofactor. In terms of tissue distribution, expressed in vasculature of roots, root tips, cotyledons, leaves, cauline leaves, stems, sepals and pollen.

It is found in the mitochondrion. The enzyme catalyses L-arginine + H2O = urea + L-ornithine. The catalysed reaction is agmatine + H2O = urea + putrescine. Its pathway is nitrogen metabolism; urea cycle; L-ornithine and urea from L-arginine: step 1/1. It functions in the pathway amine and polyamine biosynthesis; putrescine biosynthesis via agmatine pathway; putrescine from agmatine: step 1/1. In terms of biological role, catalyzes the hydrolysis of L-arginine to urea and L-ornithine. The latter can be utilized in the urea cycle or as a precursor for the synthesis of both polyamines and proline. Possesses agmatinase activity. Catalyzes the formation of putrescine from agmatine. The polypeptide is Arginase 1, mitochondrial (Arabidopsis thaliana (Mouse-ear cress)).